We begin with the raw amino-acid sequence, 135 residues long: MADFKIVVSDPKTKTYQFDITGAEANQFIGRSIGQTVDGATVGLDGYTLTITGGTDNSGFVMSPTLPGPRRQKVLIANGVGYSAVAKGVRRRKFLRGSEVAPDITQINTKVTGYSDKAIEEILGGGSEEVEAPAE.

It belongs to the eukaryotic ribosomal protein eS6 family.

The sequence is that of Small ribosomal subunit protein eS6 from Methanococcoides burtonii (strain DSM 6242 / NBRC 107633 / OCM 468 / ACE-M).